The chain runs to 232 residues: RNA chaperone ProQ (232 aa).

The interval 105-182 (EAKARVQAQR…REEQHTPVSD (78 aa)) is disordered. Residues 117-136 (QQAKKREAAAAAGEKEDAPR) show a composition bias toward basic and acidic residues. The segment covering 137–146 (RERKPRPTTP) has biased composition (basic residues). The segment covering 147–177 (RRKEGAERKPRAQKPVEKAPKTVKAPREEQH) has biased composition (basic and acidic residues).

Belongs to the ProQ family.

The protein resides in the cytoplasm. Its function is as follows. RNA chaperone with significant RNA binding, RNA strand exchange and RNA duplexing activities. May regulate ProP activity through an RNA-based, post-transcriptional mechanism. The protein is RNA chaperone ProQ of Shigella flexneri serotype 5b (strain 8401).